The sequence spans 204 residues: Thiamine-phosphate synthase (204 aa).

Residues 35 to 39 (QVREK) and Asn67 contribute to the 4-amino-2-methyl-5-(diphosphooxymethyl)pyrimidine site. The Mg(2+) site is built by Asp68 and Asp87. Residue Ser106 coordinates 4-amino-2-methyl-5-(diphosphooxymethyl)pyrimidine. 132-134 (TPT) is a 2-[(2R,5Z)-2-carboxy-4-methylthiazol-5(2H)-ylidene]ethyl phosphate binding site. Residue Lys135 coordinates 4-amino-2-methyl-5-(diphosphooxymethyl)pyrimidine. Residues Gly163 and 183–184 (VS) each bind 2-[(2R,5Z)-2-carboxy-4-methylthiazol-5(2H)-ylidene]ethyl phosphate.

The protein belongs to the thiamine-phosphate synthase family. Mg(2+) is required as a cofactor.

It catalyses the reaction 2-[(2R,5Z)-2-carboxy-4-methylthiazol-5(2H)-ylidene]ethyl phosphate + 4-amino-2-methyl-5-(diphosphooxymethyl)pyrimidine + 2 H(+) = thiamine phosphate + CO2 + diphosphate. It carries out the reaction 2-(2-carboxy-4-methylthiazol-5-yl)ethyl phosphate + 4-amino-2-methyl-5-(diphosphooxymethyl)pyrimidine + 2 H(+) = thiamine phosphate + CO2 + diphosphate. The catalysed reaction is 4-methyl-5-(2-phosphooxyethyl)-thiazole + 4-amino-2-methyl-5-(diphosphooxymethyl)pyrimidine + H(+) = thiamine phosphate + diphosphate. The protein operates within cofactor biosynthesis; thiamine diphosphate biosynthesis; thiamine phosphate from 4-amino-2-methyl-5-diphosphomethylpyrimidine and 4-methyl-5-(2-phosphoethyl)-thiazole: step 1/1. Functionally, condenses 4-methyl-5-(beta-hydroxyethyl)thiazole monophosphate (THZ-P) and 2-methyl-4-amino-5-hydroxymethyl pyrimidine pyrophosphate (HMP-PP) to form thiamine monophosphate (TMP). The polypeptide is Thiamine-phosphate synthase (Vibrio parahaemolyticus serotype O3:K6 (strain RIMD 2210633)).